A 224-amino-acid chain; its full sequence is Giant hemoglobin linker AV-1 chain (224 aa).

Residues 62 to 103 (HWCPSKYHRCGNSPQCMSNMAFCDGVNDCKNHFDEDENRCVV) enclose the LDL-receptor class A domain. 3 disulfides stabilise this stretch: Cys64–Cys77, Cys71–Cys90, and Cys84–Cys101. Asn108 carries N-linked (GlcNAc...) asparagine glycosylation.

As to quaternary structure, giant hemoglobin is composed of four heme-containing chains (AI to AIV), and two linker chains (AV and AVI).

In terms of biological role, acts as a linker for the assembly of heme-containing chains in the construction of giant hemoglobin. The chain is Giant hemoglobin linker AV-1 chain from Lamellibrachia sp. (Deep-sea giant tube worm).